The sequence spans 664 residues: DNA mismatch repair protein MutL (664 aa).

Residues 382-447 (RKAGQEQQLQ…YGEPAPSKQQ (66 aa)) form a disordered region. Residues 427–436 (RHTTSSNQSE) are compositionally biased toward polar residues.

Belongs to the DNA mismatch repair MutL/HexB family.

Its function is as follows. This protein is involved in the repair of mismatches in DNA. It is required for dam-dependent methyl-directed DNA mismatch repair. May act as a 'molecular matchmaker', a protein that promotes the formation of a stable complex between two or more DNA-binding proteins in an ATP-dependent manner without itself being part of a final effector complex. The chain is DNA mismatch repair protein MutL from Vibrio vulnificus (strain CMCP6).